Reading from the N-terminus, the 2193-residue chain is ATP-dependent helicase BRM (2193 aa).

Methionine 1 carries the N-acetylmethionine modification. The span at 1–10 (MQSGGSGGGP) shows a compositional bias: gly residues. Disordered regions lie at residues 1–126 (MQSG…QEGQ), 175–231 (MQDL…PGNM), 293–466 (QKAG…GFTK), 511–558 (SPAI…DNVG), and 580–649 (TSTD…ASAR). Low complexity predominate over residues 23–62 (ASTSSAASPSSSSSSVQQQQQQQQQQQQQQQLASRQQQQQ). Residues 38–58 (VQQQQQQQQQQQQQQQLASRQ) are a coiled coil. Residues 79–88 (GVQGMMGGGN) are compositionally biased toward gly residues. Low complexity-rich tracts occupy residues 91 to 102 (SSPGSMQMPQQS), 110 to 126 (QQQQQQQQQGSSTQEGQ), and 180 to 192 (PSSQPQASSSKPS). Over residues 204–223 (ESSSQQRNETKSHPQQQVGT) the composition is skewed to polar residues. The span at 301-320 (ASQSPSIPISSQPASSSVVP) shows a compositional bias: low complexity. 4 stretches are compositionally biased toward polar residues: residues 325-339 (PHANSASDISGQSGS), 347-358 (STGSFASTSSPR), 383-412 (QPTNGMPSGNPLQTSANETPVLDQNASTKK), and 421-433 (QMQQPRQLNTPTP). Residues 445 to 463 (SNSSLQSGQGTQQAQQRSG) are compositionally biased toward low complexity. Residues 463 to 499 (GFTKQQLHVLKAQILAFRRLKKGEGSLPPELLQAISP) form the QLQ domain. Basic and acidic residues-rich tracts occupy residues 517–537 (VQDRSSDKTGEDQARSLECGK) and 611–621 (PRSDSTADKGK). Over residues 626 to 638 (DGSQSKVPPQANS) the composition is skewed to polar residues. Residues 705-712 (LKKINGLL) carry the Nuclear localization signal 1 motif. A coiled-coil region spans residues 726–795 (VLRLQIEEKK…QKAVREKQLK (70 aa)). Residues 993 to 1158 (LSLYNNKLNG…WSLLNLLLPD (166 aa)) form the Helicase ATP-binding domain. 1006–1013 (DEMGLGKT) lines the ATP pocket. Residues 1109–1129 (DEAQRMKDRESVLARDLDRYR) are a coiled coil. Residues 1312–1489 (ILDRILIKLQ…QYKIDMADEV (178 aa)) enclose the Helicase C-terminal domain. Disordered stretches follow at residues 1583 to 1775 (SKKP…DEEQ) and 1789 to 1894 (LRPR…NAGA). Residues 1608 to 1617 (KRGRPKSKKI) show a composition bias toward basic residues. Positions 1618-1638 (NYKEIEDDIAGYSEESSEERN) form a coiled coil. Position 1641 is a phosphoserine (serine 1641). The span at 1642-1657 (GNEEEGDIRQFDDDEL) shows a compositional bias: acidic residues. Residues 1821–1832 (TVVDSHSSRQDQ) are compositionally biased toward basic and acidic residues. Low complexity predominate over residues 1833 to 1842 (SDSSSRLRSV). Composition is skewed to polar residues over residues 1848-1870 (ASTSKLHVSSPKSGRLNATQLTV) and 1882-1892 (DGTSPISSSNA). The region spanning 1895–2005 (RMSHIIQKRC…NLFFDLLKMS (111 aa)) is the Bromo domain. The Nuclear localization signal 2 motif lies at 1901–1908 (QKRCKIVI). A compositionally biased stretch (polar residues) spans 2022-2032 (GSAPTLVSTPT). The segment at 2022–2193 (GSAPTLVSTP…DSGKRRPSHL (172 aa)) is disordered. Phosphoserine is present on serine 2137. Residues 2149–2166 (LAQQQRWPNQPTHPNNSG) show a composition bias toward polar residues.

This sequence belongs to the SNF2/RAD54 helicase family. Interacts with SWI3B, SWI3C, H3 and H4, but not with SWI3A, SWI3D or BSH. Interacts with LFY. Interacts with REF6. Binds to FGT1. In terms of tissue distribution, highly expressed in inflorescences and leaves. Low expression in siliques, roots and seedlings. Detected in shoot apical meristem, root meristem, vascular tissue of developing leaves, petals, stamens filaments, anthers and carpels.

It localises to the nucleus. It carries out the reaction ATP + H2O = ADP + phosphate + H(+). ATPase subunit of a multiprotein complex equivalent of the SWI/SNF complex that acts by remodeling the chromatin by catalyzing an ATP-dependent alteration in the structure of nucleosomal DNA. Represses embryonic genes in leaves and controls shoot development and flowering. Activates flower homeotic genes. The association of BRM with its target genes requires REF6. Necessary to acquire heat stress (HS) memory, by globally binding to HS memory genes. This Arabidopsis thaliana (Mouse-ear cress) protein is ATP-dependent helicase BRM.